Reading from the N-terminus, the 480-residue chain is NADH-quinone oxidoreductase subunit N (480 aa).

A run of 14 helical transmembrane segments spans residues 11–31 (LLPELVATGFLLVVLLGGVFA), 38–58 (LVAALAGLGTLASFAAAAGLL), 76–96 (FALYFKLIITATAFFTVIAAA), 105–125 (APEYMTLIIAVALGGMLLVSM), 128–148 (LFGVFLAVELATIPSYAMVAF), 163–183 (LITGVIASSFLLYGIVLIYGV), 195–215 (AFGEGLSPVAIVGLVLMISGL), 240–260 (AAFLSVAPKAAIFAALLRILL), 270–290 (WTALMAVIAIVTMFVGNLLAL), 298–318 (MLAYSSVAHSGYILAAFAALQ), 329–349 (VMIYSAAYAVMNLGAFLTIDL), 368–388 (AAAMAVFMAALVGIPPLSGFF), 407–427 (VAVAALVVNSVLSVPYYFGII), and 453–473 (VYAMALLTALFFLGVGPLAAL).

The protein belongs to the complex I subunit 2 family. As to quaternary structure, NDH-1 is composed of 14 different subunits. Subunits NuoA, H, J, K, L, M, N constitute the membrane sector of the complex.

It is found in the cell membrane. It carries out the reaction a quinone + NADH + 5 H(+)(in) = a quinol + NAD(+) + 4 H(+)(out). NDH-1 shuttles electrons from NADH, via FMN and iron-sulfur (Fe-S) centers, to quinones in the respiratory chain. The immediate electron acceptor for the enzyme in this species is believed to be a menaquinone. Couples the redox reaction to proton translocation (for every two electrons transferred, four hydrogen ions are translocated across the cytoplasmic membrane), and thus conserves the redox energy in a proton gradient. This is NADH-quinone oxidoreductase subunit N from Rubrobacter xylanophilus (strain DSM 9941 / JCM 11954 / NBRC 16129 / PRD-1).